Here is a 289-residue protein sequence, read N- to C-terminus: MTLTLVKAWTAAKDRLKDAGIDQPSIDARLMLEVAAGVTRTEIVTDPYRELSAEQIATLNDYLERRARREPVSHIIGRKGFWKILLQVNKNVLTPRPETEVIVDEVLKAFPEHMAFSMLDLGVGSGTILLAVLAERPAAKGLGIDASSEALAVARENAANLDLNTRAALLHGDWTTGLGSDSFDLVVSNPPYIPTEVIDTLEPEVRIHEPRLALDGGPDGLAAYRELAPEILRVLKPGGLFAVEIGYDQSQAVEALFRAAGATEVRTVKDLSTHDRVVLGVKNPLESPA.

S-adenosyl-L-methionine contacts are provided by residues 122–126 (GVGSG), Asp145, Trp174, and Asn189. Residue 189–192 (NPPY) participates in substrate binding.

The protein belongs to the protein N5-glutamine methyltransferase family. PrmC subfamily.

It carries out the reaction L-glutaminyl-[peptide chain release factor] + S-adenosyl-L-methionine = N(5)-methyl-L-glutaminyl-[peptide chain release factor] + S-adenosyl-L-homocysteine + H(+). Functionally, methylates the class 1 translation termination release factors RF1/PrfA and RF2/PrfB on the glutamine residue of the universally conserved GGQ motif. This chain is Release factor glutamine methyltransferase, found in Caulobacter vibrioides (strain ATCC 19089 / CIP 103742 / CB 15) (Caulobacter crescentus).